Here is a 147-residue protein sequence, read N- to C-terminus: Mitochondrial import receptor subunit TOM20 homolog (147 aa).

At 1-3 the chain is on the mitochondrial intermembrane side; it reads MVV. Residues 4-26 form a helical membrane-spanning segment; it reads VGKTSAIAAGVCGALFLGYCIYF. Residues 27–147 are Cytoplasmic-facing; the sequence is DRKRRSDPNF…AQNLAEDDVE (121 aa).

This sequence belongs to the Tom20 family. As to quaternary structure, forms part of the preprotein translocase complex of the outer mitochondrial membrane (TOM complex). Interacts with tom22.

Its subcellular location is the mitochondrion outer membrane. Central component of the receptor complex responsible for the recognition and translocation of cytosolically synthesized mitochondrial preproteins. Together with tom22 functions as the transit peptide receptor at the surface of the mitochondrion outer membrane and facilitates the movement of preproteins into the tom40 translocation pore. The protein is Mitochondrial import receptor subunit TOM20 homolog (tomm20) of Xenopus tropicalis (Western clawed frog).